The chain runs to 110 residues: Parvalbumin alpha (110 aa).

The residue at position 2 (S2) is an N-acetylserine. Residues S2 and S24 each carry the phosphoserine modification. 2 consecutive EF-hand domains span residues 39-74 and 78-110; these read KSADDVKKVFHMLDKDKSGFIEEDELGFILKGFSPD and LSAKETKMLMAAGDKDGDGKIGVDEFSTLVAES. D52, D54, S56, F58, E60, E63, D91, D93, D95, K97, and E102 together coordinate Ca(2+).

In muscle, parvalbumin is thought to be involved in relaxation after contraction. It binds two calcium ions. The chain is Parvalbumin alpha (PVALB) from Homo sapiens (Human).